Consider the following 2549-residue polypeptide: Serine/threonine-protein kinase mTOR (2549 aa).

N-acetylmethionine is present on M1. An interaction with NBN region spans residues 1-651 (MLGTGPATAT…HVVSQTAVQV (651 aa)). HEAT repeat units follow at residues 16–53 (SSNVSVLQQFASGLKSRNEETRAKAAKELQHYVTMELR), 55–99 (MSQE…VEGG), 100–137 (NSTRIGRFANYLRNLLPSSDPVVMEMASKAIGRLAMAG), 138–179 (DTFT…AISV), 180–220 (PTFF…LILT), 222–276 (QREP…RISS), 277–313 (MEGERLREEMEEITQQQLVHDKYCKDLMGFGTKPRHI), 314–364 (TPFT…CCRD), 365–409 (LMEE…AFTD), 410–445 (TQYLQDTMNHVLSCVKKEKERTAAFQALGLLSVAVR), 446–494 (SEFK…RAMG), 495–529 (PGIQQDIKELLEPMLAVGLSPALTAVLYDLSRQIP), 530–563 (QLKKDIQDGLLKMLSLVLMHKPLRHPGMPKGLAH), 564–596 (QLASPGLTTLPEASDVASITLALRTLGSFEFEG), 597–636 (HSLTQFVRHCADHFLNSEHKEIRMEAARTCSRLLTPSIHL), 637–683 (ISGH…DERF), 686–724 (HLAQAENLQALFVALNDQVFEIRELAICTVGRLSSMNPA), 727–766 (MPFLRKMLIQILTELEHSGIGRIKEQSARMLGHLVSNAPR), 769–811 (RPYM…VSGL), 814–853 (RKWVDELFVIIMDMLQDSSLLAKRQVALWTLGQLVASTGY), 857–893 (PYRKYPTLLEVLLNFLKTEQNQGTRREAIRVLGLLGA), 894–942 (LDPY…GNLP), 943–988 (LDEF…KCVQ), 989–1027 (FLPQVMPTFLNVIRVCDGAIREFLFQQLGMLVSFVKSHI), 1029–1068 (PYMDEIVTLMREFWVMNTSIQSTIILLIEQIVVALGGEFK), 1069–1105 (LYLPQLIPHMLRVFMHDNSQGRIVSIKLLAAIQLFGA), 1106–1144 (NLDDYLHLLLPPIVKLFDAPEVPLPSRKAALETVDRLTE), 1145–1188 (SLDF…GKKY), 1189–1225 (QIFIPMVNKVLVRHRINHQRYDVLICRIVKGYTLADE), 1226–1273 (EEDP…GAAR), 1274–1311 (RVSKDDWLEWLRRLSLELLKDSSSPSLRSCWALAQAYN), and 1312–1345 (PMARDLFNAAFVSCWSELNEDQQDELIRSIELAL). The residue at position 567 (S567) is a Phosphoserine. T1162 carries the phosphothreonine modification. The residue at position 1218 (K1218) is an N6-acetyllysine. The residue at position 1261 (S1261) is a Phosphoserine. TPR repeat units follow at residues 1346–1382 (TSQDIAEVTQTLLNLAEFMEHSDKGPLPLRDDNGIVL), 1383–1408 (LGERAAKCRAYAKALHYKELEFQKGP), 1409–1442 (TPAILESLISINNKLQQPEAASGVLEYAMKHFGE), 1443–1473 (LEIQATWYEKLHEWEDALVAYDKKMDTNKDD), 1474–1507 (PELMLGRMRCLEALGEWGQLHQQCCEKWTLVNDE), 1508–1541 (TQAKMARMAAAAAWGLGQWDSMEEYTCMIPRDTH), 1542–1574 (DGAFYRAVLALHQDLFSLAQQCIDKARDLLDAE), 1575–1614 (LTAMAGESYSRAYGAMVSCHMLSELEEVIQYKLVPERREI), 1615–1649 (IRQIWWERLQGCQRIVEDWQKILMVRSLVVSPHED), 1650–1693 (MRTW…PTVH), 1694–1731 (PQVTYAYMKNMWKSARKIDAFQHMQHFVQTMQQQAQHA), 1732–1786 (IATE…DRSW), 1787–1846 (YKAW…STEG), 1898–1930 (NNLQDTLRVLTLWFDYGHWPDVNEALVEGVKAI), 1931–1970 (QIDTWLQVIPQLIARIDTPRPLVGRLIHQLLTDIGRYHPQ), and 1971–2005 (ALIYPLTVASKSTTTARHNAANKILKNMCEHSNTL). The FAT domain maps to 1382-1982 (LLGERAAKCR…IYPLTVASKS (601 aa)). Residues K1662, K1702, and R1749 each coordinate 1D-myo-inositol hexakisphosphate. The segment at 1812–1867 (DEKKKLRHASGANITNATTTATTAASAAAATSTEGSNSESEAESNESSPTPSPLQK) is disordered. A compositionally biased stretch (low complexity) spans 1826-1860 (TNATTTATTAASAAAATSTEGSNSESEAESNESSP). Positions 2012 to 2144 (VSEELIRVAI…DLELAVPGTY (133 aa)) are sufficient for interaction with the FKBP1A/rapamycin complex. K2066 is covalently cross-linked (Glycyl lysine isopeptide (Lys-Gly) (interchain with G-Cter in ubiquitin)). The PI3K/PI4K catalytic domain occupies 2156–2469 (IAPSLQVITS…GVELGEPAHK (314 aa)). S2159 carries the phosphoserine modification. Residues 2162 to 2168 (VITSKQR) form a G-loop region. Phosphothreonine is present on T2164. Residues S2165 and Q2167 each contribute to the ATP site. The residue at position 2173 (T2173) is a Phosphothreonine; by PKB/AKT1. L2185, K2187, E2190, Y2225, G2238, W2239, V2240, and T2245 together coordinate ATP. The segment at 2258-2296 (KILLNIEHRIMLRMAPDYDHLTLMQKVEVFEHAVNNTAG) is interaction with MLST8. The segment at 2335 to 2343 (GLGDRHPSN) is catalytic loop. N2343 provides a ligand contact to Mg(2+). Residues M2345 and I2356 each contribute to the ATP site. The segment at 2355 to 2380 (HIDFGDCFEVAMTREKFPEKIPFRLT) is activation loop. D2357 contacts Mg(2+). Phosphothreonine; by RPS6KB1 is present on T2446. S2448 bears the Phosphoserine; by RPS6KB1 mark. S2478 carries the post-translational modification Phosphoserine. S2481 carries the phosphoserine; by autocatalysis modification. Residues 2517–2549 (DTLDVPTQVELLIKQATSHENLCQCYIGWCPFW) form the FATC domain.

The protein belongs to the PI3/PI4-kinase family. In terms of assembly, part of the mechanistic target of rapamycin complex 1 (mTORC1) which contains MTOR, MLST8 and RPTOR. The mTORC1 complex is a 1 Md obligate dimer of two stoichiometric heterotetramers with overall dimensions of 290 A x 210 A x 135 A. It has a rhomboid shape and a central cavity, the dimeric interfaces are formed by interlocking interactions between the two MTOR and the two RPTOR subunits. The MLST8 subunit forms distal foot-like protuberances, and contacts only one MTOR within the complex, while the small AKT1S1/PRAS40 localizes to the midsection of the central core, in close proximity to RPTOR. mTORC1 associates with AKT1S1/PRAS40, which inhibits its activity by blocking MTOR substrate-recruitment site. Component of the mechanistic target of rapamycin complex 2 (mTORC2), consisting in two heterotretramers composed of MTOR, MLST8, RICTOR and MAPKAP1/SIN1. Interacts with PLPP7 and PML. Interacts with PRR5 and RICTOR; the interaction is direct within the mTORC2 complex and interaction with RICTOR is enhanced by deubiquitination of RICTOR by USP9X. mTORC1 and mTORC2 associate with DEPTOR, which regulates their activity. Interacts with WAC; WAC positively regulates MTOR activity by promoting the assembly of the TTT complex composed of TELO2, TTI1 and TTI2 and the RUVBL complex composed of RUVBL1 and RUVBL2 into the TTT-RUVBL complex which leads to the dimerization of the mTORC1 complex and its subsequent activation. Interacts with UBQLN1. Interacts with TTI1 and TELO2. Interacts with CLIP1; phosphorylates and regulates CLIP1. Interacts with NBN. Interacts with HTR6. Interacts with BRAT1. Interacts with MEAK7 (via C-terminal domain); the interaction increases upon nutrient stimulation. Interacts with TM4SF5; the interaction is positively regulated by arginine and is negatively regulated by leucine. Interacts with GPR137B. Interacts with NCKAP1L. Interacts with TPCN1 and TPCN2; the interaction is required for TPCN1 and TPCN2 sensitivity to ATP. Interacts with ATP6V1A and with CRYAB, forming a ternary complex. Interacts with SLC38A7; this interaction mediates the recruitment of mTORC1 to the lysosome and its subsequent activation. Interacts with TSPAN8. Post-translationally, autophosphorylates when part of mTORC1 or mTORC2. Phosphorylation at Ser-1261, Ser-2159 and Thr-2164 promotes autophosphorylation. Phosphorylated at Ser-2448 by RPS6KB1. Phosphorylation in the kinase domain modulates the interactions of MTOR with RPTOR and AKT1S1/PRAS40 and leads to increased intrinsic mTORC1 kinase activity. Phosphorylation at Ser-2159 by TBK1 in response to growth factors and pathogen recognition receptors promotes mTORC1 activity. Phosphorylation at Ser-2159 by TBK1 in response to EGF growth factor promotes mTORC2 activity, leading to AKT1 phosphorylation and activation. Phosphorylation at Thr-2173 in the ATP-binding region by AKT1 strongly reduces kinase activity. In terms of processing, ubiquitinated at Lys-2066 by the SCF(FBXO22) complex via 'Lys-27'-linked ubiquitination prevents mTORC1 substrate recruitment.

It is found in the lysosome membrane. It localises to the endoplasmic reticulum membrane. The protein localises to the golgi apparatus membrane. Its subcellular location is the cell membrane. The protein resides in the mitochondrion outer membrane. It is found in the cytoplasm. It localises to the nucleus. The protein localises to the PML body. Its subcellular location is the microsome membrane. The protein resides in the cytoplasmic vesicle. It is found in the phagosome. It carries out the reaction L-seryl-[protein] + ATP = O-phospho-L-seryl-[protein] + ADP + H(+). The catalysed reaction is L-threonyl-[protein] + ATP = O-phospho-L-threonyl-[protein] + ADP + H(+). It catalyses the reaction L-tyrosyl-[protein] + ATP = O-phospho-L-tyrosyl-[protein] + ADP + H(+). Its activity is regulated as follows. The mTORC1 complex is activated in response to nutrients, growth factors or amino acids: activation requires relocalization of the mTORC1 complex to lysosomes that is mediated by the Ragulator complex, SLC38A9, and the Rag GTPases RagA/RRAGA, RagB/RRAGB, RagC/RRAGC and RagD/RRAGD. Activation of mTORC1 by growth factors such as insulin involves AKT1-mediated phosphorylation of TSC1-TSC2, which leads to the activation of the RHEB GTPase a potent activator of the protein kinase activity of mTORC1. Insulin-stimulated and amino acid-dependent phosphorylation at Ser-1261 promotes autophosphorylation and the activation of mTORC1. On the other hand, low cellular energy levels can inhibit mTORC1 through activation of PRKAA1 while hypoxia inhibits mTORC1 through a REDD1-dependent mechanism which may also require PRKAA1. The kinase activity of MTOR within the mTORC1 complex is positively regulated by MLST8. The kinase activity of MTOR is inhibited by DEPTOR and AKT1S1. The non-canonical mTORC1 complex is independent of the RHEB GTPase and specifically mediates phosphorylation of MiT/TFE factors TFEB and TFE3 but not other mTORC1 substrates: it is activated by FLCN, which activates Rag GTPases RagC/RRAGC and RagD/RRAGD. MTOR is the target of the immunosuppressive and anti-cancer drug rapamycin which acts in complex with FKBP1A/FKBP12, and specifically inhibits its kinase activity. mTORC2 is also activated by growth factors, but seems to be nutrient-insensitive. mTORC2 associates and is directly activated by ribosomes. mTORC2 may also be regulated by RHEB but in an indirect manner through the PI3K signaling pathway. Its function is as follows. Serine/threonine protein kinase which is a central regulator of cellular metabolism, growth and survival in response to hormones, growth factors, nutrients, energy and stress signals. MTOR directly or indirectly regulates the phosphorylation of at least 800 proteins. Functions as part of 2 structurally and functionally distinct signaling complexes mTORC1 and mTORC2 (mTOR complex 1 and 2). In response to nutrients, growth factors or amino acids, mTORC1 is recruited to the lysosome membrane and promotes protein, lipid and nucleotide synthesis by phosphorylating key regulators of mRNA translation and ribosome synthesis. This includes phosphorylation of EIF4EBP1 and release of its inhibition toward the elongation initiation factor 4E (eiF4E). Moreover, phosphorylates and activates RPS6KB1 and RPS6KB2 that promote protein synthesis by modulating the activity of their downstream targets including ribosomal protein S6, eukaryotic translation initiation factor EIF4B, and the inhibitor of translation initiation PDCD4. Stimulates the pyrimidine biosynthesis pathway, both by acute regulation through RPS6KB1-mediated phosphorylation of the biosynthetic enzyme CAD, and delayed regulation, through transcriptional enhancement of the pentose phosphate pathway which produces 5-phosphoribosyl-1-pyrophosphate (PRPP), an allosteric activator of CAD at a later step in synthesis, this function is dependent on the mTORC1 complex. Regulates ribosome synthesis by activating RNA polymerase III-dependent transcription through phosphorylation and inhibition of MAF1 an RNA polymerase III-repressor. Activates dormant ribosomes by mediating phosphorylation of SERBP1, leading to SERBP1 inactivation and reactivation of translation. In parallel to protein synthesis, also regulates lipid synthesis through SREBF1/SREBP1 and LPIN1. To maintain energy homeostasis mTORC1 may also regulate mitochondrial biogenesis through regulation of PPARGC1A. In the same time, mTORC1 inhibits catabolic pathways: negatively regulates autophagy through phosphorylation of ULK1. Under nutrient sufficiency, phosphorylates ULK1 at 'Ser-758', disrupting the interaction with AMPK and preventing activation of ULK1. Also prevents autophagy through phosphorylation of the autophagy inhibitor DAP. Also prevents autophagy by phosphorylating RUBCNL/Pacer under nutrient-rich conditions. Prevents autophagy by mediating phosphorylation of AMBRA1, thereby inhibiting AMBRA1 ability to mediate ubiquitination of ULK1 and interaction between AMBRA1 and PPP2CA. mTORC1 exerts a feedback control on upstream growth factor signaling that includes phosphorylation and activation of GRB10 a INSR-dependent signaling suppressor. Among other potential targets mTORC1 may phosphorylate CLIP1 and regulate microtubules. The mTORC1 complex is inhibited in response to starvation and amino acid depletion. The non-canonical mTORC1 complex, which acts independently of RHEB, specifically mediates phosphorylation of MiT/TFE factors TFEB and TFE3 in the presence of nutrients, promoting their cytosolic retention and inactivation. Upon starvation or lysosomal stress, inhibition of mTORC1 induces dephosphorylation and nuclear translocation of TFEB and TFE3, promoting their transcription factor activity. The mTORC1 complex regulates pyroptosis in macrophages by promoting GSDMD oligomerization. MTOR phosphorylates RPTOR which in turn inhibits mTORC1. As part of the mTORC2 complex, MTOR transduces signals from growth factors to pathways involved in proliferation, cytoskeletal organization, lipogenesis and anabolic output. In response to growth factors, mTORC2 phosphorylates and activates AGC protein kinase family members, including AKT (AKT1, AKT2 and AKT3), PKC (PRKCA, PRKCB and PRKCE) and SGK1. In contrast to mTORC1, mTORC2 is nutrient-insensitive. mTORC2 plays a critical role in AKT1 activation by mediating phosphorylation of different sites depending on the context, such as 'Thr-450', 'Ser-473', 'Ser-477' or 'Thr-479', facilitating the phosphorylation of the activation loop of AKT1 on 'Thr-308' by PDPK1/PDK1 which is a prerequisite for full activation. mTORC2 also regulates the phosphorylation of SGK1 at 'Ser-422'. mTORC2 may regulate the actin cytoskeleton, through phosphorylation of PRKCA, PXN and activation of the Rho-type guanine nucleotide exchange factors RHOA and RAC1A or RAC1B. The mTORC2 complex also phosphorylates various proteins involved in insulin signaling, such as FBXW8 and IGF2BP1. May also regulate insulin signaling by acting as a tyrosine protein kinase that catalyzes phosphorylation of IGF1R and INSR. Regulates osteoclastogenesis by adjusting the expression of CEBPB isoforms. Plays an important regulatory role in the circadian clock function; regulates period length and rhythm amplitude of the suprachiasmatic nucleus (SCN) and liver clocks. This is Serine/threonine-protein kinase mTOR from Rattus norvegicus (Rat).